The chain runs to 995 residues: Bifunctional glutamine synthetase adenylyltransferase/adenylyl-removing enzyme (995 aa).

Positions 1–487 (MNVTKPATQR…LHAKLFYQPL (487 aa)) are adenylyl removase. An adenylyl transferase region spans residues 492–995 (APAGLEIAGR…KAVVRKVFGS (504 aa)).

This sequence belongs to the GlnE family. It depends on Mg(2+) as a cofactor.

The enzyme catalyses [glutamine synthetase]-O(4)-(5'-adenylyl)-L-tyrosine + phosphate = [glutamine synthetase]-L-tyrosine + ADP. It catalyses the reaction [glutamine synthetase]-L-tyrosine + ATP = [glutamine synthetase]-O(4)-(5'-adenylyl)-L-tyrosine + diphosphate. Involved in the regulation of glutamine synthetase GlnA, a key enzyme in the process to assimilate ammonia. When cellular nitrogen levels are high, the C-terminal adenylyl transferase (AT) inactivates GlnA by covalent transfer of an adenylyl group from ATP to specific tyrosine residue of GlnA, thus reducing its activity. Conversely, when nitrogen levels are low, the N-terminal adenylyl removase (AR) activates GlnA by removing the adenylyl group by phosphorolysis, increasing its activity. The regulatory region of GlnE binds the signal transduction protein PII (GlnB) which indicates the nitrogen status of the cell. The sequence is that of Bifunctional glutamine synthetase adenylyltransferase/adenylyl-removing enzyme from Mycobacterium marinum (strain ATCC BAA-535 / M).